The chain runs to 1577 residues: High molecular weight form of myosin-1 (1577 aa).

In terms of domain architecture, Myosin motor spans Lys-75–Asn-751. The residue at position 119 (Lys-119) is an N6,N6,N6-trimethyllysine. Gly-168–Thr-175 serves as a coordination point for ATP. Actin-binding stretches follow at residues Leu-628 to Ser-650 and Gln-730 to Arg-744. The 28-residue stretch at Glu-755 to Pro-782 folds into the IQ domain. The MyTH4 domain occupies Trp-1261 to Lys-1401. Disordered regions lie at residues Ser-1442–Ala-1466 and Gln-1483–Glu-1516. Low complexity-rich tracts occupy residues Pro-1444–Ala-1466 and Gln-1483–Ala-1497. The 59-residue stretch at Glu-1519 to Ile-1577 folds into the SH3 domain.

It belongs to the TRAFAC class myosin-kinesin ATPase superfamily. Myosin family. As to quaternary structure, myosin I heavy chain is single-headed.

This is High molecular weight form of myosin-1 from Acanthamoeba castellanii (Amoeba).